The following is a 284-amino-acid chain: L-ribulose-5-phosphate 3-epimerase UlaE (284 aa).

This sequence belongs to the L-ribulose-5-phosphate 3-epimerase family.

The enzyme catalyses L-ribulose 5-phosphate = L-xylulose 5-phosphate. The protein operates within cofactor degradation; L-ascorbate degradation; D-xylulose 5-phosphate from L-ascorbate: step 3/4. Its function is as follows. Catalyzes the isomerization of L-xylulose-5-phosphate to L-ribulose-5-phosphate. Is involved in the anaerobic L-ascorbate utilization. The chain is L-ribulose-5-phosphate 3-epimerase UlaE from Salmonella heidelberg (strain SL476).